A 300-amino-acid polypeptide reads, in one-letter code: Cation-efflux pump FieF (300 aa).

The chain crosses the membrane as a helical span at residues Leu24 to Val44. Zn(2+) contacts are provided by Asp45 and Asp49. 2 helical membrane passes run Ala82–Ile102 and Pro114–Phe134. His153 and Asp157 together coordinate Zn(2+). A run of 2 helical transmembrane segments spans residues Ser156–His176 and Ala178–Gly198.

The protein belongs to the cation diffusion facilitator (CDF) transporter (TC 2.A.4) family. FieF subfamily. Homodimer.

It localises to the cell inner membrane. The catalysed reaction is Zn(2+)(in) + H(+)(out) = Zn(2+)(out) + H(+)(in). It carries out the reaction Cd(2+)(in) + H(+)(out) = Cd(2+)(out) + H(+)(in). It catalyses the reaction Fe(2+)(in) + H(+)(out) = Fe(2+)(out) + H(+)(in). Functionally, divalent metal cation transporter which exports Zn(2+), Cd(2+) and possibly Fe(2+). May be involved in zinc and iron detoxification by efflux. The polypeptide is Cation-efflux pump FieF (Salmonella agona (strain SL483)).